The following is a 150-amino-acid chain: Cyanate hydratase (150 aa).

Residues Arg-91, Glu-94, and Ser-117 contribute to the active site.

Belongs to the cyanase family.

It carries out the reaction cyanate + hydrogencarbonate + 3 H(+) = NH4(+) + 2 CO2. Its function is as follows. Catalyzes the reaction of cyanate with bicarbonate to produce ammonia and carbon dioxide. This chain is Cyanate hydratase, found in Synechococcus sp. (strain CC9311).